The chain runs to 1000 residues: MAERKPNGGSGGASTSSSGTNLLFSSSATEFSFNVPFIPVTQASASPASLLLPGEDSTDVGEEDSFLGQTSIHTSAPQTFSYFSQVSSSSDPFGNIGQSPLTTAATSVGQSGFPKPLTALPFTTGSQDVSNAFSPSISKAQPGAPPSSLMGINSYLPSQPSSLPPSYFGNQPQGIPQPGYNPYRHTPGSSRANPYIAPPQLQQCQTPGPPAHPPPSGPPVQMYQMPPGSLPPVPSSVQSPAQQQVPARPGAPSVQVPSPFLLQNQYEPVQPHWFYCKEVEYKQLWMPFSVFDSLNLEEIYNSVQPDPESVVLGTDGGRYDVYLYDRIRKAAYWEEEPAEVRRCTWFYKGDTDSRFIPYTEEFSEKLEAEYKKAVTTNQWHRRLEFPSGETIVMHNPKVIVQFQPSSVPDEWGTTQDGQTRPRVVKRGIDDNLDEIPDGEMPQVDHLVFVVHGIGPVCDLRFRSIIECVDDFRVVSLKLLRTHFKKSLDDGKVSRVEFLPVHWHSSLGGDATGVDRNIKKITLPSIGRFRHFTNETLLDILFYNSPTYCQTIVEKVGMEINHLHALFMSRNPDFKGGVSVAGHSLGSLILFDILSNQKDLNLSKCPGPLAVANGVVKQLHFQEKQMPEEPKLTLDESYDLVVENKEVLTLQETLEALSLSEYFSTFEKEKIDMESLLMCTVDDLKEMGIPLGPRKKIANFVEHKAAKLKKAASEKKAVAATSTKGQEQSAQKTKDMASLPSESNEPKRKLPVGACVSSVCVNYESFEVGAGQVSVAYNSLDFEPEIFFALGSPIAMFLTIRGVDRIDENYSLPTCKGFFNIYHPLDPVAYRLEPMIVPDLDLKAVLIPHHKGRKRLHLELKESLSRMGSDLKQGFISSLKSAWQTLNEFARAHTSSTQLQEELEKVANQIKEEEEKQVVEAEKVVESPDFSKDEDYLGKVGMLNGGRRIDYVLQEKPIESFNEYLFALQSHLCYWESEDTALLLLKEIYRTMNISPEQPQH.

Residues 1 to 367 (MAERKPNGGS…YTEEFSEKLE (367 aa)) are interaction with SEC23A. The segment at 133-252 (FSPSISKAQP…QQVPARPGAP (120 aa)) is disordered. Residues 154 to 167 (SYLPSQPSSLPPSY) are compositionally biased toward low complexity. The span at 207-218 (PGPPAHPPPSGP) shows a compositional bias: pro residues. Residues 235-246 (SSVQSPAQQQVP) show a composition bias toward low complexity. Residues 644–707 (KEVLTLQETL…NFVEHKAAKL (64 aa)) enclose the SAM domain. A disordered region spans residues 716–748 (AVAATSTKGQEQSAQKTKDMASLPSESNEPKRK). A phosphoserine mark is found at serine 737 and serine 926. Residues 779 to 989 (LDFEPEIFFA…ALLLLKEIYR (211 aa)) enclose the DDHD domain.

Belongs to the PA-PLA1 family. As to quaternary structure, interacts with SEC23A. Ubiquitously expressed with stronger levels detected in heart, liver and skeletal muscle.

Its subcellular location is the cytoplasmic vesicle. It localises to the COPII-coated vesicle membrane. The protein localises to the endoplasmic reticulum. In terms of biological role, plays a role in the organization of endoplasmic reticulum exit sites. Specifically binds to phosphatidylinositol 3-phosphate (PI(3)P), phosphatidylinositol 4-phosphate (PI(4)P) and phosphatidylinositol 5-phosphate (PI(5)P). This chain is SEC23-interacting protein (SEC23IP), found in Homo sapiens (Human).